The chain runs to 420 residues: Serine--tRNA ligase (420 aa).

229 to 231 (TAE) is an L-serine binding site. 260–262 (RAE) provides a ligand contact to ATP. L-serine is bound at residue Glu-283. 347–350 (EISS) serves as a coordination point for ATP. Residue Ser-382 participates in L-serine binding.

This sequence belongs to the class-II aminoacyl-tRNA synthetase family. Type-1 seryl-tRNA synthetase subfamily. Homodimer. The tRNA molecule binds across the dimer.

The protein resides in the cytoplasm. The catalysed reaction is tRNA(Ser) + L-serine + ATP = L-seryl-tRNA(Ser) + AMP + diphosphate + H(+). It carries out the reaction tRNA(Sec) + L-serine + ATP = L-seryl-tRNA(Sec) + AMP + diphosphate + H(+). It functions in the pathway aminoacyl-tRNA biosynthesis; selenocysteinyl-tRNA(Sec) biosynthesis; L-seryl-tRNA(Sec) from L-serine and tRNA(Sec): step 1/1. Catalyzes the attachment of serine to tRNA(Ser). Is also able to aminoacylate tRNA(Sec) with serine, to form the misacylated tRNA L-seryl-tRNA(Sec), which will be further converted into selenocysteinyl-tRNA(Sec). The chain is Serine--tRNA ligase from Caldicellulosiruptor bescii (strain ATCC BAA-1888 / DSM 6725 / KCTC 15123 / Z-1320) (Anaerocellum thermophilum).